The following is a 435-amino-acid chain: Methylenetetrahydrofolate--tRNA-(uracil-5-)-methyltransferase TrmFO (435 aa).

An FAD-binding site is contributed by 9 to 14; the sequence is GGGLAG.

Belongs to the MnmG family. TrmFO subfamily. FAD is required as a cofactor.

The protein resides in the cytoplasm. It carries out the reaction uridine(54) in tRNA + (6R)-5,10-methylene-5,6,7,8-tetrahydrofolate + NADH + H(+) = 5-methyluridine(54) in tRNA + (6S)-5,6,7,8-tetrahydrofolate + NAD(+). The catalysed reaction is uridine(54) in tRNA + (6R)-5,10-methylene-5,6,7,8-tetrahydrofolate + NADPH + H(+) = 5-methyluridine(54) in tRNA + (6S)-5,6,7,8-tetrahydrofolate + NADP(+). Catalyzes the folate-dependent formation of 5-methyl-uridine at position 54 (M-5-U54) in all tRNAs. The protein is Methylenetetrahydrofolate--tRNA-(uracil-5-)-methyltransferase TrmFO of Citrifermentans bemidjiense (strain ATCC BAA-1014 / DSM 16622 / JCM 12645 / Bem) (Geobacter bemidjiensis).